The following is a 159-amino-acid chain: Protein NrdI (159 aa).

It belongs to the NrdI family.

Functionally, probably involved in ribonucleotide reductase function. This chain is Protein NrdI, found in Rhodococcus erythropolis (strain PR4 / NBRC 100887).